A 212-amino-acid chain; its full sequence is Uridine kinase (212 aa).

13–20 (GASASGKS) lines the ATP pocket.

This sequence belongs to the uridine kinase family.

Its subcellular location is the cytoplasm. The catalysed reaction is uridine + ATP = UMP + ADP + H(+). It catalyses the reaction cytidine + ATP = CMP + ADP + H(+). The protein operates within pyrimidine metabolism; CTP biosynthesis via salvage pathway; CTP from cytidine: step 1/3. It participates in pyrimidine metabolism; UMP biosynthesis via salvage pathway; UMP from uridine: step 1/1. The polypeptide is Uridine kinase (Shewanella amazonensis (strain ATCC BAA-1098 / SB2B)).